The following is an 80-amino-acid chain: Large ribosomal subunit protein uL24 (80 aa).

The protein belongs to the universal ribosomal protein uL24 family. In terms of assembly, part of the 50S ribosomal subunit.

Its function is as follows. One of two assembly initiator proteins, it binds directly to the 5'-end of the 23S rRNA, where it nucleates assembly of the 50S subunit. In terms of biological role, one of the proteins that surrounds the polypeptide exit tunnel on the outside of the subunit. The chain is Large ribosomal subunit protein uL24 from Chlorobium phaeobacteroides (strain DSM 266 / SMG 266 / 2430).